The primary structure comprises 167 residues: Small heat shock protein C1 (167 aa).

The sHSP domain maps to 59-167 (SLYESNSIKS…EQEAREIVID (109 aa)).

Belongs to the small heat shock protein (HSP20) family.

The protein is Small heat shock protein C1 (hspC1) of Rickettsia conorii (strain ATCC VR-613 / Malish 7).